The following is a 355-amino-acid chain: Methylthioribose-1-phosphate isomerase (355 aa).

Substrate-binding positions include 52–54 (RGA), R95, and Q204. D245 serves as the catalytic Proton donor. Position 255–256 (255–256 (NK)) interacts with substrate.

Belongs to the eIF-2B alpha/beta/delta subunits family. MtnA subfamily.

The enzyme catalyses 5-(methylsulfanyl)-alpha-D-ribose 1-phosphate = 5-(methylsulfanyl)-D-ribulose 1-phosphate. It participates in amino-acid biosynthesis; L-methionine biosynthesis via salvage pathway; L-methionine from S-methyl-5-thio-alpha-D-ribose 1-phosphate: step 1/6. In terms of biological role, catalyzes the interconversion of methylthioribose-1-phosphate (MTR-1-P) into methylthioribulose-1-phosphate (MTRu-1-P). The chain is Methylthioribose-1-phosphate isomerase from Acaryochloris marina (strain MBIC 11017).